The following is a 516-amino-acid chain: Bifunctional purine biosynthesis protein PurH (516 aa).

Positions 1 to 146 (MTRLALLSVS…KNYAHVTVLS (146 aa)) constitute an MGS-like domain.

The protein belongs to the PurH family.

The catalysed reaction is (6R)-10-formyltetrahydrofolate + 5-amino-1-(5-phospho-beta-D-ribosyl)imidazole-4-carboxamide = 5-formamido-1-(5-phospho-D-ribosyl)imidazole-4-carboxamide + (6S)-5,6,7,8-tetrahydrofolate. It catalyses the reaction IMP + H2O = 5-formamido-1-(5-phospho-D-ribosyl)imidazole-4-carboxamide. It functions in the pathway purine metabolism; IMP biosynthesis via de novo pathway; 5-formamido-1-(5-phospho-D-ribosyl)imidazole-4-carboxamide from 5-amino-1-(5-phospho-D-ribosyl)imidazole-4-carboxamide (10-formyl THF route): step 1/1. Its pathway is purine metabolism; IMP biosynthesis via de novo pathway; IMP from 5-formamido-1-(5-phospho-D-ribosyl)imidazole-4-carboxamide: step 1/1. The chain is Bifunctional purine biosynthesis protein PurH from Rippkaea orientalis (strain PCC 8801 / RF-1) (Cyanothece sp. (strain PCC 8801)).